A 104-amino-acid polypeptide reads, in one-letter code: Putative heat shock protein PS1 (104 aa).

Asn11 and Asn18 each carry an N-linked (GlcNAc...) asparagine glycan. ATP is bound at residue Asn18.

Belongs to the heat shock protein 90 family. As to quaternary structure, homodimer.

It is found in the cytoplasm. Putative molecular chaperone that may promote the maturation, structural maintenance and proper regulation of specific target proteins. This is Putative heat shock protein PS1 from Pinus strobus (Eastern white pine).